The following is a 513-amino-acid chain: V-type proton ATPase subunit B, kidney isoform (513 aa).

The span at 1–18 (MATTVDSRSSGFTGNSCD) shows a compositional bias: polar residues. Residues 1–21 (MATTVDSRSSGFTGNSCDPGT) form a disordered region. R394 contributes to the ATP binding site. Residues 510–513 (DTAL) carry the PDZ-binding motif.

This sequence belongs to the ATPase alpha/beta chains family. In terms of assembly, V-ATPase is a heteromultimeric enzyme made up of two complexes: the ATP-hydrolytic V1 complex and the proton translocation V0 complex. The V1 complex consists of three catalytic AB heterodimers that form a heterohexamer, three peripheral stalks each consisting of EG heterodimers, one central rotor including subunits D and F, and the regulatory subunits C and H. The proton translocation complex V0 consists of the proton transport subunit a, a ring of proteolipid subunits c9c'', rotary subunit d, subunits e and f, and the accessory subunits ATP6AP1/Ac45 and ATP6AP2/PRR. Forms a complex with NHERF1 and SCL4A7. In terms of tissue distribution, highly expressed in the kidney; found in early distal nephron, encompassing thick ascending limbs and distal convoluted tubules and in the alpha-intercalated cells of the cortical collecting ducts (at protein level). Expressed in the olfactory epithelium (at protein level). Expressed at lower levels in the testis.

The protein resides in the apical cell membrane. It localises to the basolateral cell membrane. In terms of biological role, non-catalytic subunit of the V1 complex of vacuolar(H+)-ATPase (V-ATPase), a multisubunit enzyme composed of a peripheral complex (V1) that hydrolyzes ATP and a membrane integral complex (V0) that translocates protons. V-ATPase is responsible for acidifying and maintaining the pH of intracellular compartments and in some cell types, is targeted to the plasma membrane, where it is responsible for acidifying the extracellular environment. Essential for the proper assembly and activity of V-ATPase. In renal intercalated cells, mediates secretion of protons (H+) into the urine thereby ensuring correct urinary acidification. Required for optimal olfactory function by mediating the acidification of the nasal olfactory epithelium. The protein is V-type proton ATPase subunit B, kidney isoform (Atp6v1b1) of Mus musculus (Mouse).